A 156-amino-acid chain; its full sequence is Small ribosomal subunit protein uS7 (156 aa).

This sequence belongs to the universal ribosomal protein uS7 family. As to quaternary structure, part of the 30S ribosomal subunit. Contacts proteins S9 and S11.

In terms of biological role, one of the primary rRNA binding proteins, it binds directly to 16S rRNA where it nucleates assembly of the head domain of the 30S subunit. Is located at the subunit interface close to the decoding center, probably blocks exit of the E-site tRNA. The sequence is that of Small ribosomal subunit protein uS7 from Aeromonas salmonicida (strain A449).